We begin with the raw amino-acid sequence, 649 residues long: Quinol oxidase subunit 1 (649 aa).

At 1-15 (MKFKWDEFFVTGDPL) the chain is on the extracellular side. The helical transmembrane segment at 16–34 (ILGAQVSIALSTIAIIFVL) threads the bilayer. The Cytoplasmic portion of the chain corresponds to 35–56 (TYFKKWKWLWSEWITTVDHKKL). A helical membrane pass occupies residues 57-75 (GIMYIISAVIMLFRGGVDG). Topologically, residues 76-97 (LMMRAQLALPNNSFLDSNHYNE) are extracellular. A helical membrane pass occupies residues 98–117 (IFTTHGTIMIIFMAMPFLIG). Residue His102 coordinates Fe(II)-heme a. Over 118 to 139 (LINVVVPLQIGARDVAFPYLNN) the chain is Cytoplasmic. Residues 140 to 157 (LSFWTFFVGAMLFNISFV) form a helical membrane-spanning segment. The Extracellular portion of the chain corresponds to 158-190 (IGGSPNAGWTSYMPLASNDMSPGPGENYYLLGL). A helical transmembrane segment spans residues 191–209 (QIAGIGTLMTGINFMVTIL). Over 210–227 (KMRTKGMTLMRMPMFTWT) the chain is Cytoplasmic. A helical transmembrane segment spans residues 228–246 (TLITMVIIVFAFPVLTVAL). At 247 to 272 (ALLSFDRLFGAHFFTLEAGGMPMLWA) the chain is on the extracellular side. A helical membrane pass occupies residues 273-292 (NLFWIWGHPEVYIVILPAFG). The Cu cation site is built by His280 and Tyr284. A cross-link (1'-histidyl-3'-tyrosine (His-Tyr)) is located at residues 280–284 (HPEVY). Residues 293–315 (IFSEIISSFARKQLFGYKAMVGS) lie on the Cytoplasmic side of the membrane. Residues 316–335 (IIAISVLSFLVWTHHFFTMG) form a helical membrane-spanning segment. Positions 329 and 330 each coordinate Cu cation. Topologically, residues 336–343 (NSASVNSF) are extracellular. A helical membrane pass occupies residues 344 to 362 (FSITTMAISIPTGVKIFNW). Over 363–377 (LFTMYKGRISFTTPM) the chain is Cytoplasmic. The chain crosses the membrane as a helical span at residues 378–397 (LWALAFIPNFVIGGVTGVML). Over 398-405 (AMAAADYQ) the chain is Extracellular. The helical transmembrane segment at 406–425 (YHNTYFLVSHFHYVLIAGTV) threads the bilayer. His415 is a binding site for heme a3. His417 contacts Fe(II)-heme a. At 426-452 (FACFAGFIFWYPKMFGHKLNERIGKWF) the chain is on the cytoplasmic side. A helical membrane pass occupies residues 453–472 (FWIFMIGFNICFFPQYFLGL). The Extracellular portion of the chain corresponds to 473–490 (QGMPRRIYTYGPNDGWTT). The helical transmembrane segment at 491–510 (LNFISTVGAFMMGVGFLILC) threads the bilayer. The Cytoplasmic segment spans residues 511-584 (YNIYYSFRYS…SKFKKIHMPS (74 aa)). The chain crosses the membrane as a helical span at residues 585–604 (NSGRPFFMSVAFGLAGFGLV). At 605-610 (FEWYWM) the chain is on the extracellular side. The helical transmembrane segment at 611-631 (GVVGLIGVLLCMVLRSFEYDN) threads the bilayer. Residues 632-649 (GYYISVDEIKETERKISE) are Cytoplasmic-facing.

This sequence belongs to the heme-copper respiratory oxidase family. The cofactor is Cu cation. It depends on ferriheme a as a cofactor. Heme A3. serves as cofactor.

Its subcellular location is the cell membrane. The catalysed reaction is 2 a quinol + O2 = 2 a quinone + 2 H2O. It functions in the pathway energy metabolism; oxidative phosphorylation. Its function is as follows. Catalyzes quinol oxidation with the concomitant reduction of oxygen to water. Major component for energy conversion during vegetative growth. The polypeptide is Quinol oxidase subunit 1 (qoxB) (Bacillus subtilis (strain 168)).